A 113-amino-acid chain; its full sequence is Small ribosomal subunit protein bS6 (113 aa).

It belongs to the bacterial ribosomal protein bS6 family.

In terms of biological role, binds together with bS18 to 16S ribosomal RNA. This chain is Small ribosomal subunit protein bS6, found in Buchnera aphidicola subsp. Schizaphis graminum (strain Sg).